The chain runs to 111 residues: UPF0145 protein BTH_I2656 (111 aa).

The protein belongs to the UPF0145 family.

The protein is UPF0145 protein BTH_I2656 of Burkholderia thailandensis (strain ATCC 700388 / DSM 13276 / CCUG 48851 / CIP 106301 / E264).